Consider the following 331-residue polypeptide: Phosphate acyltransferase (331 aa).

Belongs to the PlsX family. Homodimer. Probably interacts with PlsY.

Its subcellular location is the cytoplasm. The catalysed reaction is a fatty acyl-[ACP] + phosphate = an acyl phosphate + holo-[ACP]. It functions in the pathway lipid metabolism; phospholipid metabolism. Functionally, catalyzes the reversible formation of acyl-phosphate (acyl-PO(4)) from acyl-[acyl-carrier-protein] (acyl-ACP). This enzyme utilizes acyl-ACP as fatty acyl donor, but not acyl-CoA. In Chlorobaculum tepidum (strain ATCC 49652 / DSM 12025 / NBRC 103806 / TLS) (Chlorobium tepidum), this protein is Phosphate acyltransferase.